The following is a 517-amino-acid chain: Ascochitine biosynthesis cluster MFS transporter (517 aa).

Residues 1–12 (MSPDSRDPEAQR) show a composition bias toward basic and acidic residues. The interval 1–45 (MSPDSRDPEAQRDVGLTKNTSSVNIPLESVKTDKTSNASPIMGPG) is disordered. N-linked (GlcNAc...) asparagine glycosylation occurs at N19. The next 12 membrane-spanning stretches (helical) occupy residues 75 to 95 (WVITWLLSFLNVWVTFSSTIF), 111 to 131 (VVMTLGVSLTVLGFAVGPLIW), 141 to 161 (LTPFYFGYAVFCIFQIPVGVA), 172 to 192 (FFIGFFGTSAMAVTPGVLADI), 204 to 224 (VYAAAAFIGPIFGPIVGGFVV), 232 to 252 (WTAWITLILASAFGLAALVFV), 308 to 328 (ILLLVTLYISLVYGVLYLFFV), 347 to 367 (ALPLLAVMLGTLAGCLTILFV), 390 to 410 (LMMVGSVSLPIGLFWFGWTSS), 421 to 441 (AGFPIGIGLALIWVQGLSFLI), 457 to 475 (LIRSAVGAAFPLFGAPMYH), and 485 to 505 (LLGFLSVAMIPIPVAFYYYGP).

The protein belongs to the major facilitator superfamily. CAR1 family.

It localises to the membrane. Its function is as follows. MFS transporter; part of the gene cluster that mediates the biosynthesis the mycotoxin ascochitine, an o-quinone methide that plays a possible protective role against other microbial competitors in nature and is considered to be important for pathogenicity of legume-associated Didymella species. This chain is Ascochitine biosynthesis cluster MFS transporter, found in Didymella fabae (Leaf and pod spot disease fungus).